Reading from the N-terminus, the 198-residue chain is RNA pyrophosphohydrolase (198 aa).

Positions 6 to 149 (GYRPNVGIVI…KKEVYRKAMK (144 aa)) constitute a Nudix hydrolase domain. Residues 38–59 (GGINDNESAEQAMYRELFEEVG) carry the Nudix box motif.

This sequence belongs to the Nudix hydrolase family. RppH subfamily. The cofactor is a divalent metal cation.

Accelerates the degradation of transcripts by removing pyrophosphate from the 5'-end of triphosphorylated RNA, leading to a more labile monophosphorylated state that can stimulate subsequent ribonuclease cleavage. This chain is RNA pyrophosphohydrolase, found in Pasteurella multocida (strain Pm70).